A 37-amino-acid chain; its full sequence is GKFSVFGKILRSIAKVFKGVGKVRKQFKTASDLDKNQ.

As to expression, expressed by the venom gland.

It localises to the secreted. Disrupts biological membranes, particularly those rich in phosphocholine. Has antimicrobial activity against Gram-negative bacterium E.coli, Gram-positive bacteria B.subtilis and S.aureus, and hemolytic activity against sheep, pig and guinea pig red blood cells. Has insecticidal activity against S.frugiperda ovarian cells by opening non-selective ion channels. Enhances the insecticidal activity of spider venom neurotoxic peptides. This is M-oxotoxin-Ot2a from Oxyopes takobius (Lynx spider).